The sequence spans 358 residues: 3-dehydroquinate synthase (358 aa).

NAD(+)-binding positions include 70–75 (DGEQYK), 104–108 (GVIGD), 128–129 (TT), Lys141, Lys150, and 168–171 (CLHT). Residues Glu183, His246, and His263 each contribute to the Zn(2+) site.

It belongs to the sugar phosphate cyclases superfamily. Dehydroquinate synthase family. Co(2+) is required as a cofactor. The cofactor is Zn(2+). Requires NAD(+) as cofactor.

It localises to the cytoplasm. The catalysed reaction is 7-phospho-2-dehydro-3-deoxy-D-arabino-heptonate = 3-dehydroquinate + phosphate. The protein operates within metabolic intermediate biosynthesis; chorismate biosynthesis; chorismate from D-erythrose 4-phosphate and phosphoenolpyruvate: step 2/7. Its function is as follows. Catalyzes the conversion of 3-deoxy-D-arabino-heptulosonate 7-phosphate (DAHP) to dehydroquinate (DHQ). The protein is 3-dehydroquinate synthase of Shewanella loihica (strain ATCC BAA-1088 / PV-4).